Consider the following 513-residue polypeptide: MSENQKEVSPPQAISVKSEASSSIFSKPISTSSPAGLAAAQRVTPGKLSTLLLEMGPLAIRHITQTLCLDIPCFKDLSSSKQRRLIMSAMESGDKEKSVVFEKIGWGQWSAKRVDPANFDKELEATNFANAKVKDLISQESQRRKSNNSNSNSGGKVEMPMKVEHNITNIDGATTPPTAVASTTIPVNIKRSKSPLAAANVVYIDENALASEDEDEEFDEDDHHLHYQNKSRNSSNNFGKSSNGDPYSFGRRRSQVVFADSTPENIEHEIIAQKIRPLLRNRRRSSIKPHTPFISKLNTHQDSSYLSPNTTSTTTPSNNNSNSNQAKIDLEKLTATSEPTSRRASRLSVSKESSIRSTLFPNKNYLIVTTNPNSKATSVSTSPKLEEQMNVSSNPIVLSDKEKHRVASQHLNGESSPQLVPHSHHQPHSDTDEEDWESIGAASLRNNSLAPNIDSVASSTNGVVSPKPTNPSFTNSQNGDIEPPLQHDQQKHEQQPRNGEDNSAAFLLMSLKS.

Disordered regions lie at residues 1-20, 134-159, and 227-249; these read MSEN…KSEA, KDLI…KVEM, and YQNK…PYSF. Residues 134 to 143 show a composition bias toward basic and acidic residues; the sequence is KDLISQESQR. Positions 230-244 are enriched in low complexity; the sequence is KSRNSSNNFGKSSNG. Residue Ser254 is modified to Phosphoserine. Disordered stretches follow at residues 282-354, 373-437, and 450-513; these read RRRS…KESS, NSKA…EDWE, and APNI…SLKS. Residues 296-306 show a composition bias toward polar residues; that stretch reads KLNTHQDSSYL. The segment covering 307–324 has biased composition (low complexity); that stretch reads SPNTTSTTTPSNNNSNSN. Polar residues-rich tracts occupy residues 373-396, 409-418, 450-463, and 470-479; these read NSKA…SNPI, QHLNGESSPQ, APNI…TNGV, and NPSFTNSQNG. Residues 488–500 show a composition bias toward basic and acidic residues; sequence DQQKHEQQPRNGE.

It belongs to the STB3 family. As to quaternary structure, interacts with SIN3.

The protein resides in the cytoplasm. This chain is Protein STB3 (STB3), found in Saccharomyces cerevisiae (strain ATCC 204508 / S288c) (Baker's yeast).